Here is a 321-residue protein sequence, read N- to C-terminus: Fructose-1,6-bisphosphatase 2 class 2 (321 aa).

Mn(2+)-binding residues include aspartate 32, glutamate 56, aspartate 84, and glutamate 87. Substrate-binding positions include 87–89 (EGT), tyrosine 118, 163–165 (KPR), 185–187 (DGD), and glycine 209. Position 212 (glutamate 212) interacts with Mn(2+).

The protein belongs to the FBPase class 2 family. As to quaternary structure, homodimer. Mn(2+) serves as cofactor.

It catalyses the reaction beta-D-fructose 1,6-bisphosphate + H2O = beta-D-fructose 6-phosphate + phosphate. With respect to regulation, competitively inhibited by low concentrations of phosphate (IC50 of 1.2 mM) and is also sensitive to Li(+) (IC50 of 15.8 mM). Also inhibited by 1 mM ATP or 50 mM KCl (60% and 20% residual activity, respectively). Slightly activated (40-50%) by the addition of 1 mM dithiothreitol in vitro. Its function is as follows. Catalyzes the hydrolysis of fructose 1,6-bisphosphate to fructose 6-phosphate. Also displays a low activity toward glucose 1,6-bisphosphate, and no activity against ribulose 1,5-bisphosphate, fructose 2,6-bisphosphate, or fructose 1-phosphate. The sequence is that of Fructose-1,6-bisphosphatase 2 class 2 (yggF) from Escherichia coli (strain K12).